A 457-amino-acid polypeptide reads, in one-letter code: Cytochrome b-c1 complex subunit 1, mitochondrial (457 aa).

The N-terminal 26 residues, 1 to 26, are a transit peptide targeting the mitochondrion; it reads MLRTVTSKTVSNQFKRSLATAVATPK.

Belongs to the peptidase M16 family. UQCRC1/QCR1 subfamily. In terms of assembly, component of the ubiquinol-cytochrome c oxidoreductase (cytochrome b-c1 complex, complex III, CIII), a multisubunit enzyme composed of 10 subunits. The complex is composed of 3 respiratory subunits cytochrome b (COB), cytochrome c1 (CYT1) and Rieske protein (RIP1), 2 core protein subunits COR1 and QCR2, and 5 low-molecular weight protein subunits QCR6, QCR7, QCR8, QCR9 and QCR10. The complex exists as an obligatory dimer and forms supercomplexes (SCs) in the inner mitochondrial membrane with a monomer or a dimer of cytochrome c oxidase (complex IV, CIV), resulting in 2 different assemblies (supercomplexes III(2)IV and III(2)IV(2)). COR1 interacts with COX5A at the CIII-CIV interface.

It localises to the mitochondrion inner membrane. Component of the ubiquinol-cytochrome c oxidoreductase, a multisubunit transmembrane complex that is part of the mitochondrial electron transport chain which drives oxidative phosphorylation. The respiratory chain contains 3 multisubunit complexes succinate dehydrogenase (complex II, CII), ubiquinol-cytochrome c oxidoreductase (cytochrome b-c1 complex, complex III, CIII) and cytochrome c oxidase (complex IV, CIV), that cooperate to transfer electrons derived from NADH and succinate to molecular oxygen, creating an electrochemical gradient over the inner membrane that drives transmembrane transport and the ATP synthase. The cytochrome b-c1 complex catalyzes electron transfer from ubiquinol to cytochrome c, linking this redox reaction to translocation of protons across the mitochondrial inner membrane, with protons being carried across the membrane as hydrogens on the quinol. In the process called Q cycle, 2 protons are consumed from the matrix, 4 protons are released into the intermembrane space and 2 electrons are passed to cytochrome c. The polypeptide is Cytochrome b-c1 complex subunit 1, mitochondrial (COR1) (Saccharomyces cerevisiae (strain ATCC 204508 / S288c) (Baker's yeast)).